The sequence spans 268 residues: Probable chemotaxis protein methyltransferase (268 aa).

One can recognise a CheR-type methyltransferase domain in the interval 1 to 262 (MIYSDAGIFL…GITTYRYTTK (262 aa)). Residues asparagine 60, threonine 62, arginine 66, glutamate 104, aspartate 130, 188-189 (NL), and 205-206 (RN) contribute to the S-adenosyl-L-methionine site.

The enzyme catalyses L-glutamyl-[protein] + S-adenosyl-L-methionine = [protein]-L-glutamate 5-O-methyl ester + S-adenosyl-L-homocysteine. Functionally, methylation of the membrane-bound methyl-accepting chemotaxis proteins (MCP) to form gamma-glutamyl methyl ester residues in MCP. The protein is Probable chemotaxis protein methyltransferase (cheRch1) of Rhizobium etli (strain ATCC 51251 / DSM 11541 / JCM 21823 / NBRC 15573 / CFN 42).